Consider the following 437-residue polypeptide: Matrix remodeling-associated protein 8 (437 aa).

An N-terminal signal peptide occupies residues 1–22 (MEQLAKLLLWQLLLQQSSVVYL). Residues 23-339 (YSVPADASNP…PESRIHFFQQ (317 aa)) are Extracellular-facing. Ig-like V-type domains follow at residues 32–159 (PDSV…LDIT) and 167–294 (EYWD…VFVT). N41, N121, N246, and N304 each carry an N-linked (GlcNAc...) asparagine glycan. 2 disulfides stabilise this stretch: C54-C139 and C188-C274. The helical transmembrane segment at 340-360 (LGYVLATLLLFVVLLIIVVFI) threads the bilayer. The Cytoplasmic portion of the chain corresponds to 361-437 (TRKRRQRGYE…DKDFRKEYCK (77 aa)).

Homodimer in cis. Does not appear to form trans-homodimers.

It is found in the cell membrane. In terms of biological role, transmembrane protein which can modulate activity of various signaling pathways, probably via binding to integrin ITGAV:ITGB3. Mediates heterophilic cell-cell interactions in vitro. In Gallus gallus (Chicken), this protein is Matrix remodeling-associated protein 8 (MXRA8).